Consider the following 378-residue polypeptide: uncharacterized protein (378 aa).

This is an uncharacterized protein from Nostoc sp. (strain PCC 7120 / SAG 25.82 / UTEX 2576).